Reading from the N-terminus, the 319-residue chain is Beta-ketoacyl-[acyl-carrier-protein] synthase III (319 aa).

Catalysis depends on residues Cys113 and His246. The tract at residues 247-251 is ACP-binding; it reads QANLR. Asn276 is a catalytic residue.

It belongs to the thiolase-like superfamily. FabH family. Homodimer.

It is found in the cytoplasm. The enzyme catalyses malonyl-[ACP] + acetyl-CoA + H(+) = 3-oxobutanoyl-[ACP] + CO2 + CoA. It functions in the pathway lipid metabolism; fatty acid biosynthesis. Its function is as follows. Catalyzes the condensation reaction of fatty acid synthesis by the addition to an acyl acceptor of two carbons from malonyl-ACP. Catalyzes the first condensation reaction which initiates fatty acid synthesis and may therefore play a role in governing the total rate of fatty acid production. Possesses both acetoacetyl-ACP synthase and acetyl transacylase activities. Its substrate specificity determines the biosynthesis of branched-chain and/or straight-chain of fatty acids. This Laribacter hongkongensis (strain HLHK9) protein is Beta-ketoacyl-[acyl-carrier-protein] synthase III.